Consider the following 268-residue polypeptide: Indole-3-glycerol phosphate synthase (268 aa).

The protein belongs to the TrpC family.

The catalysed reaction is 1-(2-carboxyphenylamino)-1-deoxy-D-ribulose 5-phosphate + H(+) = (1S,2R)-1-C-(indol-3-yl)glycerol 3-phosphate + CO2 + H2O. The protein operates within amino-acid biosynthesis; L-tryptophan biosynthesis; L-tryptophan from chorismate: step 4/5. The sequence is that of Indole-3-glycerol phosphate synthase from Magnetococcus marinus (strain ATCC BAA-1437 / JCM 17883 / MC-1).